Consider the following 310-residue polypeptide: Nucleotide-binding protein Ddes_0972 (310 aa).

30-37 (GLSGAGKS) contributes to the ATP binding site. Position 82 to 85 (82 to 85 (DLRQ)) interacts with GTP.

It belongs to the RapZ-like family.

Functionally, displays ATPase and GTPase activities. This Desulfovibrio desulfuricans (strain ATCC 27774 / DSM 6949 / MB) protein is Nucleotide-binding protein Ddes_0972.